Reading from the N-terminus, the 227-residue chain is GFP-like non-fluorescent chromoprotein (227 aa).

The segment at residues 63-65 is a cross-link (5-imidazolinone (Ala-Gly)); that stretch reads AYG. 2,3-didehydrotyrosine is present on Tyr64.

The protein belongs to the GFP family. In terms of assembly, homotetramer. Contains a chromophore consisting of modified amino acid residues. The chromophore is formed by autocatalytic backbone condensation between Xaa-N and Gly-(N+2), and oxidation of Tyr-(N+1) to didehydrotyrosine. Maturation of the chromophore requires nothing other than molecular oxygen. The precise stereochemistry of the tyrosine has not been determined.

Its function is as follows. Non-fluorescent pigment protein that is mauve in color. The wild-type form is non-fluorescent. This chain is GFP-like non-fluorescent chromoprotein, found in Condylactis gigantea (Giant Caribbean anemone).